A 222-amino-acid polypeptide reads, in one-letter code: UPF0173 metal-dependent hydrolase Nther_2337 (222 aa).

Belongs to the UPF0173 family.

This Natranaerobius thermophilus (strain ATCC BAA-1301 / DSM 18059 / JW/NM-WN-LF) protein is UPF0173 metal-dependent hydrolase Nther_2337.